Reading from the N-terminus, the 153-residue chain is MKLNELYNNIGAKKRKKRIARGIGSGKGKTGGRGIKGQKSRSGVAIKGFEGGQTPIIKRLPKRGFNCISTKKYNIVNIYNIEVALADGRLSVADIITKEKLIEAGVVNNKNNKKLVKLLSLCSDDFATPLSLKLDAYSSKAKDFIEQAGGKLL.

The disordered stretch occupies residues 21–40 (RGIGSGKGKTGGRGIKGQKS). Residues 23 to 35 (IGSGKGKTGGRGI) show a composition bias toward gly residues.

It belongs to the universal ribosomal protein uL15 family. In terms of assembly, part of the 50S ribosomal subunit.

Its function is as follows. Binds to the 23S rRNA. The chain is Large ribosomal subunit protein uL15 from Rickettsia canadensis (strain McKiel).